The sequence spans 390 residues: MKKIALTALAVFSLAASAAYADVVKVGVIGPFSGPFALQGKNFKAGIDAYMAEHGNKVGDDTVEVVYRDVPQADPAQSKALAQELVVKEGVQYLAGFYFTPDAMAVTPILKQGNVPMVVMNAATSSIVTKSPYVVRTSFTTWQTSTPIARVALDKGVKKVISVVSDYGPGVDAENAFKAAFTDAGGEVVEAIRMPLATNDFSPIMQRIKDSGAQGVFAFLPSDPTTLGFMKAYVDNGLKSSGIQLFAPGDLTQESDLPALGENALGVLTTFHYAVSHDSPENRKFVEEARKAIGNPAELSFPSVGAYDGMHVIYKMIEATGGKKDAAKAVEAVKGMEWVSPRGPVSIDPESRHITQNIYLREVAKADDGTYYNKEIQTFEKQGDPGLKAQ.

The N-terminal stretch at 1-21 (MKKIALTALAVFSLAASAAYA) is a signal peptide.

Belongs to the leucine-binding protein family.

In terms of biological role, component of an amino-acid transport system. This chain is Leu/Ile/Val-binding protein homolog 6, found in Brucella suis biovar 1 (strain 1330).